Consider the following 377-residue polypeptide: Putative glutamate--cysteine ligase 2 (377 aa).

The protein belongs to the glutamate--cysteine ligase type 2 family. YbdK subfamily.

The catalysed reaction is L-cysteine + L-glutamate + ATP = gamma-L-glutamyl-L-cysteine + ADP + phosphate + H(+). Its function is as follows. ATP-dependent carboxylate-amine ligase which exhibits weak glutamate--cysteine ligase activity. The polypeptide is Putative glutamate--cysteine ligase 2 (Pseudomonas aeruginosa (strain LESB58)).